The sequence spans 251 residues: B3 domain-containing protein REM7 (251 aa).

2 DNA-binding regions (TF-B3) span residues 11 to 103 (NSHF…LGPS) and 170 to 251 (CFVA…SRLN).

It is found in the nucleus. This Arabidopsis thaliana (Mouse-ear cress) protein is B3 domain-containing protein REM7 (REM7).